Reading from the N-terminus, the 201-residue chain is Putative 3-methyladenine DNA glycosylase (201 aa).

The protein belongs to the DNA glycosylase MPG family.

The chain is Putative 3-methyladenine DNA glycosylase from Nitrosococcus oceani (strain ATCC 19707 / BCRC 17464 / JCM 30415 / NCIMB 11848 / C-107).